Consider the following 346-residue polypeptide: Phosphoribosylformylglycinamidine cyclo-ligase (346 aa).

This sequence belongs to the AIR synthase family.

The protein resides in the cytoplasm. It catalyses the reaction 2-formamido-N(1)-(5-O-phospho-beta-D-ribosyl)acetamidine + ATP = 5-amino-1-(5-phospho-beta-D-ribosyl)imidazole + ADP + phosphate + H(+). Its pathway is purine metabolism; IMP biosynthesis via de novo pathway; 5-amino-1-(5-phospho-D-ribosyl)imidazole from N(2)-formyl-N(1)-(5-phospho-D-ribosyl)glycinamide: step 2/2. This Shewanella halifaxensis (strain HAW-EB4) protein is Phosphoribosylformylglycinamidine cyclo-ligase.